We begin with the raw amino-acid sequence, 188 residues long: Protease-associated domain-containing protein 1 (188 aa).

The first 21 residues, 1–21 (MVPGAAGWCCLVLWLPACVAA), serve as a signal peptide directing secretion. The PA domain occupies 83 to 163 (IQDQIALVER…RSLEQHGLPW (81 aa)). N-linked (GlcNAc...) asparagine glycosylation occurs at Asn171.

N-glycosylated; required for efficient secretion. As to expression, highly expressed in skeletal muscle, heart and liver. Expressed at intermediate level in kidney.

The protein resides in the secreted. In terms of biological role, plays a role in the modulation of physical activity and adiposity. The sequence is that of Protease-associated domain-containing protein 1 from Homo sapiens (Human).